The following is a 483-amino-acid chain: Trigger factor (483 aa).

The 82-residue stretch at 162-243 (GDYVSLDLSA…VRGVKEKELP (82 aa)) folds into the PPIase FKBP-type domain. The segment at 459 to 483 (AVAPGDGDATVEPVEPVEAETDGNG) is disordered. Residues 473 to 483 (EPVEAETDGNG) show a composition bias toward acidic residues.

Belongs to the FKBP-type PPIase family. Tig subfamily.

The protein localises to the cytoplasm. It catalyses the reaction [protein]-peptidylproline (omega=180) = [protein]-peptidylproline (omega=0). Its function is as follows. Involved in protein export. Acts as a chaperone by maintaining the newly synthesized protein in an open conformation. Functions as a peptidyl-prolyl cis-trans isomerase. The chain is Trigger factor from Frankia casuarinae (strain DSM 45818 / CECT 9043 / HFP020203 / CcI3).